The following is a 408-amino-acid chain: Acetylornithine aminotransferase (408 aa).

Residues 107 to 108 (GT) and Phe141 contribute to the pyridoxal 5'-phosphate site. Arg144 is a N(2)-acetyl-L-ornithine binding site. 227–230 (DEIQ) contacts pyridoxal 5'-phosphate. N6-(pyridoxal phosphate)lysine is present on Lys256. Thr284 contributes to the N(2)-acetyl-L-ornithine binding site. Thr285 is a pyridoxal 5'-phosphate binding site.

It belongs to the class-III pyridoxal-phosphate-dependent aminotransferase family. ArgD subfamily. As to quaternary structure, homodimer. The cofactor is pyridoxal 5'-phosphate.

Its subcellular location is the cytoplasm. It carries out the reaction N(2)-acetyl-L-ornithine + 2-oxoglutarate = N-acetyl-L-glutamate 5-semialdehyde + L-glutamate. It participates in amino-acid biosynthesis; L-arginine biosynthesis; N(2)-acetyl-L-ornithine from L-glutamate: step 4/4. This Xanthomonas campestris pv. campestris (strain ATCC 33913 / DSM 3586 / NCPPB 528 / LMG 568 / P 25) protein is Acetylornithine aminotransferase.